Here is a 264-residue protein sequence, read N- to C-terminus: Glutamate racemase (264 aa).

Residues 10-11 (DS) and 42-43 (YG) contribute to the substrate site. The Proton donor/acceptor role is filled by Cys-73. A substrate-binding site is contributed by 74–75 (NT). Residue Cys-183 is the Proton donor/acceptor of the active site. Residue 184–185 (TH) coordinates substrate.

Belongs to the aspartate/glutamate racemases family.

The catalysed reaction is L-glutamate = D-glutamate. Its pathway is cell wall biogenesis; peptidoglycan biosynthesis. Functionally, provides the (R)-glutamate required for cell wall biosynthesis. The polypeptide is Glutamate racemase (Streptococcus pneumoniae (strain ATCC BAA-255 / R6)).